The primary structure comprises 298 residues: Porphobilinogen deaminase (298 aa).

An S-(dipyrrolylmethanemethyl)cysteine modification is found at Cys-239.

Belongs to the HMBS family. In terms of assembly, monomer. Requires dipyrromethane as cofactor.

The enzyme catalyses 4 porphobilinogen + H2O = hydroxymethylbilane + 4 NH4(+). It participates in porphyrin-containing compound metabolism; protoporphyrin-IX biosynthesis; coproporphyrinogen-III from 5-aminolevulinate: step 2/4. Its function is as follows. Tetrapolymerization of the monopyrrole PBG into the hydroxymethylbilane pre-uroporphyrinogen in several discrete steps. In Orientia tsutsugamushi (strain Boryong) (Rickettsia tsutsugamushi), this protein is Porphobilinogen deaminase.